Reading from the N-terminus, the 251-residue chain is Hydroxyacylglutathione hydrolase (251 aa).

Residues histidine 53, histidine 55, aspartate 57, histidine 58, histidine 110, aspartate 127, and histidine 165 each contribute to the Zn(2+) site.

The protein belongs to the metallo-beta-lactamase superfamily. Glyoxalase II family. As to quaternary structure, monomer. Zn(2+) is required as a cofactor.

The catalysed reaction is an S-(2-hydroxyacyl)glutathione + H2O = a 2-hydroxy carboxylate + glutathione + H(+). It functions in the pathway secondary metabolite metabolism; methylglyoxal degradation; (R)-lactate from methylglyoxal: step 2/2. In terms of biological role, thiolesterase that catalyzes the hydrolysis of S-D-lactoyl-glutathione to form glutathione and D-lactic acid. In Buchnera aphidicola subsp. Acyrthosiphon pisum (strain APS) (Acyrthosiphon pisum symbiotic bacterium), this protein is Hydroxyacylglutathione hydrolase.